The sequence spans 111 residues: WAP four-disulfide core domain protein 12 (111 aa).

An N-terminal signal peptide occupies residues 1–23; that stretch reads MGSSSFLVLMVSLALVTLVAAEG. A WAP domain is found at 27 to 74; the sequence is GIEKAGVCPADNIRCFKSDPPQCHTDQDCLGERKCCYLHCGFKCVIPV. 4 disulfides stabilise this stretch: C34-C62, C41-C66, C49-C61, and C55-C70. Positions 80–111 are disordered; it reads GGNKDEDVSGPCPEPGWEAKSPGSSSTGCPQK. Residues 101-111 are compositionally biased toward polar residues; the sequence is PGSSSTGCPQK.

It is found in the secreted. In terms of biological role, antibacterial protein. Putative acid-stable proteinase inhibitor. This is WAP four-disulfide core domain protein 12 (WFDC12) from Macaca mulatta (Rhesus macaque).